Consider the following 497-residue polypeptide: Lysine--tRNA ligase (497 aa).

The Mg(2+) site is built by Glu-405 and Glu-412.

Belongs to the class-II aminoacyl-tRNA synthetase family. In terms of assembly, homodimer. Mg(2+) serves as cofactor.

It localises to the cytoplasm. It carries out the reaction tRNA(Lys) + L-lysine + ATP = L-lysyl-tRNA(Lys) + AMP + diphosphate. This chain is Lysine--tRNA ligase, found in Gloeobacter violaceus (strain ATCC 29082 / PCC 7421).